We begin with the raw amino-acid sequence, 193 residues long: MAVIPMVVEQSSKGERAYDIYSRLLKERIIFLNGGVEDEMAKLIIAQMLFLEAEDPEKDIYLYINSPGGVVTAGLAIYDTMNFIKPDVSTLCMGQACSMGAFLLSAGAKGKRFALPNSRVMIHQPLGGYRGQATDIQIHAQEILKLKEMLTRKMAEHCSQPFEKVAQDTERDNFMSAEEAKAYGLIDDVVTKR.

Catalysis depends on serine 98, which acts as the Nucleophile. Histidine 123 is an active-site residue.

It belongs to the peptidase S14 family. As to quaternary structure, fourteen ClpP subunits assemble into 2 heptameric rings which stack back to back to give a disk-like structure with a central cavity, resembling the structure of eukaryotic proteasomes.

The protein localises to the cytoplasm. The enzyme catalyses Hydrolysis of proteins to small peptides in the presence of ATP and magnesium. alpha-casein is the usual test substrate. In the absence of ATP, only oligopeptides shorter than five residues are hydrolyzed (such as succinyl-Leu-Tyr-|-NHMec, and Leu-Tyr-Leu-|-Tyr-Trp, in which cleavage of the -Tyr-|-Leu- and -Tyr-|-Trp bonds also occurs).. In terms of biological role, cleaves peptides in various proteins in a process that requires ATP hydrolysis. Has a chymotrypsin-like activity. Plays a major role in the degradation of misfolded proteins. The protein is ATP-dependent Clp protease proteolytic subunit of Glaesserella parasuis serovar 5 (strain SH0165) (Haemophilus parasuis).